The primary structure comprises 699 residues: Ciliated left-right organizer metallopeptidase (699 aa).

Residues 1–18 (MKMWRLLLLGVATGRCLH) form the signal peptide. The Extracellular segment spans residues 19-663 (EETQKSVRLL…SLDHNPSMTE (645 aa)). Residue His-238 participates in Zn(2+) binding. Glu-239 is an active-site residue. His-242 and His-318 together coordinate Zn(2+). A helical membrane pass occupies residues 664–684 (LLLSTGFCLLVLILVGALGTL). The Cytoplasmic portion of the chain corresponds to 685–699 (AYQKRAMLQVAPSTT).

The protein belongs to the peptidase M8 family. Zn(2+) serves as cofactor. In terms of tissue distribution, specifically expressed in ciliated left-right organizer.

Its subcellular location is the membrane. Functionally, putative metalloproteinase that plays a role in left-right patterning process. The protein is Ciliated left-right organizer metallopeptidase of Mus musculus (Mouse).